The chain runs to 210 residues: DNA-directed RNA polymerase subunit 5-like protein 1 (210 aa).

Belongs to the archaeal Rpo5/eukaryotic RPB5 RNA polymerase subunit family.

It is found in the nucleus. This chain is DNA-directed RNA polymerase subunit 5-like protein 1 (NRPB5L1), found in Arabidopsis thaliana (Mouse-ear cress).